Consider the following 118-residue polypeptide: Non-specific lipid-transfer protein (118 aa).

The N-terminal stretch at 1-25 is a signal peptide; the sequence is MDCIRILWSVAVGLLLVSWRPTMFA. 4 cysteine pairs are disulfide-bonded: Cys-30–Cys-76, Cys-40–Cys-53, Cys-54–Cys-98, and Cys-74–Cys-113.

It belongs to the plant LTP family.

In terms of biological role, plant non-specific lipid-transfer proteins transfer phospholipids as well as galactolipids across membranes. May play a role in wax or cutin deposition in the cell walls of expanding epidermal cells and certain secretory tissues. The chain is Non-specific lipid-transfer protein from Ambrosia artemisiifolia (Common ragweed).